Reading from the N-terminus, the 611-residue chain is DNA-directed RNA polymerase subunit Rpo2C (611 aa).

The Zn(2+) site is built by C547, C550, C565, and C568.

The protein belongs to the RNA polymerase beta chain family. In terms of assembly, part of the RNA polymerase complex. Zn(2+) is required as a cofactor.

It is found in the cytoplasm. The catalysed reaction is RNA(n) + a ribonucleoside 5'-triphosphate = RNA(n+1) + diphosphate. In terms of biological role, DNA-dependent RNA polymerase (RNAP) catalyzes the transcription of DNA into RNA using the four ribonucleoside triphosphates as substrates. The Rpo2 subunit (Rpo2N and Rpo2C in this organism) is implicated in DNA promoter recognition and in nucleotide binding. The sequence is that of DNA-directed RNA polymerase subunit Rpo2C from Methanococcus vannielii (strain ATCC 35089 / DSM 1224 / JCM 13029 / OCM 148 / SB).